Here is a 376-residue protein sequence, read N- to C-terminus: MASSLKLGLIALLGATAVNAAPAAEPVLGTSLLTSRASCTFSGSSGAAEAIKSKTSCSTITLSNVEVPAGTTLDLTGLKSGTTVIFEGTTTFGYKEWEGPLVSVSGTSITVQGASGAQLNGDGARWWDGKGTNGGKTKPKFFYAHSLTNSKIENIYIKNSPVQVFSINGAKELTLSGITVDTADGDSNGGHNTDAFDVGSSNGVYITSPIVHNQDDCLAVNSGTNVHFTGAQCTGGHGISIGSVGGRSDNTVDGVTVESCTIKDSDNGVRIKTVYGATGTVQGVTYKDITLSGIAKYGIVIEQDYENGSPTGTPTSGVPITDLTLDNVHGTVASSGVDTYILCASGACSDWSWSGVSITGGQTSKKCKGIPSGASC.

Residues 1–20 form the signal peptide; the sequence is MASSLKLGLIALLGATAVNA. C39 and C57 are joined by a disulfide. One copy of the PbH1 1 repeat lies at 170 to 208; sequence AKELTLSGITVDTADGDSNGGHNTDAFDVGSSNGVYITS. D215 serves as the catalytic Proton donor. Residues C217 and C233 are joined by a disulfide bond. PbH1 repeat units follow at residues 223 to 243, 252 to 273, 281 to 303, and 315 to 360; these read GTNVHFTGAQCTGGHGISIGS, VDGVTVESCTIKDSDNGVRIKT, VQGVTYKDITLSGIAKYGIVIEQ, and TSGV…SITG. H237 is an active-site residue. 2 disulfides stabilise this stretch: C343–C348 and C367–C376.

It belongs to the glycosyl hydrolase 28 family.

The protein resides in the secreted. It carries out the reaction (1,4-alpha-D-galacturonosyl)n+m + H2O = (1,4-alpha-D-galacturonosyl)n + (1,4-alpha-D-galacturonosyl)m.. This is Polygalacturonase (PGG1) from Penicillium griseoroseum.